The chain runs to 310 residues: Ribosomal RNA small subunit methyltransferase H (310 aa).

S-adenosyl-L-methionine contacts are provided by residues Gly32–His34, Asp52, Phe79, Asp100, and Gln107.

Belongs to the methyltransferase superfamily. RsmH family.

Its subcellular location is the cytoplasm. It carries out the reaction cytidine(1402) in 16S rRNA + S-adenosyl-L-methionine = N(4)-methylcytidine(1402) in 16S rRNA + S-adenosyl-L-homocysteine + H(+). Specifically methylates the N4 position of cytidine in position 1402 (C1402) of 16S rRNA. This chain is Ribosomal RNA small subunit methyltransferase H, found in Bacillus mycoides (strain KBAB4) (Bacillus weihenstephanensis).